The following is a 399-amino-acid chain: MEKFKLLKLGKPATLLLEDGTVFRGKSFSNPQTVTGEIVFNTGMTGYQEIFTDPSYNEQLVVLTYPEIGNTGTNLDDYESLKIQAKGIILKNLSNAYSNFRAMRSLLSFLKRHKVVEIHDIDTRALVLHIRNNKTMLAVISNETYNLTFKEAKATIKYGKHTLNSNLASRVSTSLDYYQWMQPLNRKLKFGYSIIRSFNSAINKKLHTSKKLRIIVLDLGVKFNILRYLKSFECEVIIVNYKSTYQQVMKFHPDGIVISNGPGDPAKINRVVVRVNKFINKKIPILGICLGHQILARCFEAKTFKLKFGHRGLNHPVGINKRMEITSQNHGFAVNFEFLKSNKFYANHLNLNDGTLAGISSQNFPLISVQYHPEGSPGPHDSNYLFKYWVYIIYKSKSS.

The segment at 1–209 (MEKFKLLKLG…SAINKKLHTS (209 aa)) is CPSase. The L-glutamine site is built by serine 55, glycine 261, and glycine 263. The region spanning 213–399 (RIIVLDLGVK…VYIIYKSKSS (187 aa)) is the Glutamine amidotransferase type-1 domain. The active-site Nucleophile is the cysteine 289. Positions 290, 293, 329, 331, and 332 each coordinate L-glutamine. Residues histidine 372 and glutamate 374 contribute to the active site.

It belongs to the CarA family. In terms of assembly, composed of two chains; the small (or glutamine) chain promotes the hydrolysis of glutamine to ammonia, which is used by the large (or ammonia) chain to synthesize carbamoyl phosphate. Tetramer of heterodimers (alpha,beta)4.

Its subcellular location is the plastid. It is found in the chloroplast. The catalysed reaction is hydrogencarbonate + L-glutamine + 2 ATP + H2O = carbamoyl phosphate + L-glutamate + 2 ADP + phosphate + 2 H(+). It carries out the reaction L-glutamine + H2O = L-glutamate + NH4(+). It participates in amino-acid biosynthesis; L-arginine biosynthesis; carbamoyl phosphate from bicarbonate: step 1/1. It functions in the pathway pyrimidine metabolism; UMP biosynthesis via de novo pathway; (S)-dihydroorotate from bicarbonate: step 1/3. In terms of biological role, small subunit of the glutamine-dependent carbamoyl phosphate synthetase (CPSase). CPSase catalyzes the formation of carbamoyl phosphate from the ammonia moiety of glutamine, carbonate, and phosphate donated by ATP, constituting the first step of 2 biosynthetic pathways, one leading to arginine and/or urea and the other to pyrimidine nucleotides. The small subunit (glutamine amidotransferase) binds and cleaves glutamine to supply the large subunit with the substrate ammonia. This Cyanidium caldarium (Red alga) protein is Carbamoyl phosphate synthase small chain.